The chain runs to 284 residues: Bifunctional protein FolD (284 aa).

Residue 166-168 coordinates NADP(+); the sequence is GAS.

This sequence belongs to the tetrahydrofolate dehydrogenase/cyclohydrolase family. In terms of assembly, homodimer.

The enzyme catalyses (6R)-5,10-methylene-5,6,7,8-tetrahydrofolate + NADP(+) = (6R)-5,10-methenyltetrahydrofolate + NADPH. It catalyses the reaction (6R)-5,10-methenyltetrahydrofolate + H2O = (6R)-10-formyltetrahydrofolate + H(+). The protein operates within one-carbon metabolism; tetrahydrofolate interconversion. In terms of biological role, catalyzes the oxidation of 5,10-methylenetetrahydrofolate to 5,10-methenyltetrahydrofolate and then the hydrolysis of 5,10-methenyltetrahydrofolate to 10-formyltetrahydrofolate. The protein is Bifunctional protein FolD of Legionella pneumophila subsp. pneumophila (strain Philadelphia 1 / ATCC 33152 / DSM 7513).